Here is a 657-residue protein sequence, read N- to C-terminus: Probable cobalt/nickel-exporting P-type ATPase (657 aa).

5 helical membrane-spanning segments follow: residues 40–60 (WATV…NGAP), 62–82 (AMWW…SAWA), 101–121 (AAVG…IVIF), 268–288 (LGMV…GADL), and 299–319 (MIVA…LSAI). Aspartate 347 functions as the 4-aspartylphosphate intermediate in the catalytic mechanism. Aspartate 543 and aspartate 547 together coordinate Mg(2+). Residues 596–618 (VVTVNLAIAATFIAVLVLWDLFG) form a helical membrane-spanning segment.

It belongs to the cation transport ATPase (P-type) (TC 3.A.3) family. Type IB subfamily.

The protein resides in the cell membrane. Functionally, involved in heavy metal homeostasis. Probably exports nickel and cobalt ions out of the cell. This chain is Probable cobalt/nickel-exporting P-type ATPase (ctpD), found in Mycobacterium bovis (strain ATCC BAA-935 / AF2122/97).